We begin with the raw amino-acid sequence, 130 residues long: Small ribosomal subunit protein uS11 (130 aa).

This sequence belongs to the universal ribosomal protein uS11 family. Part of the 30S ribosomal subunit. Interacts with proteins S7 and S18. Binds to IF-3.

In terms of biological role, located on the platform of the 30S subunit, it bridges several disparate RNA helices of the 16S rRNA. Forms part of the Shine-Dalgarno cleft in the 70S ribosome. This Aliarcobacter butzleri (strain RM4018) (Arcobacter butzleri) protein is Small ribosomal subunit protein uS11.